The following is a 377-amino-acid chain: uncharacterized protein (377 aa).

This is an uncharacterized protein from Caenorhabditis elegans.